Consider the following 318-residue polypeptide: uncharacterized protein (318 aa).

This sequence to A.aeolicus AA07 and AA11.

This is an uncharacterized protein from Aquifex aeolicus (strain VF5).